Here is a 150-residue protein sequence, read N- to C-terminus: Meiotically up-regulated gene 108 protein (150 aa).

Residues 1–11 are compositionally biased toward polar residues; that stretch reads MANRFTSSDQT. The segment at 1–150 is disordered; it reads MANRFTSSDQ…RDISLLGSTI (150 aa). The segment covering 12–23 has biased composition (basic and acidic residues); sequence QETHGHHVDKHS. Residues 83–93 are compositionally biased toward polar residues; sequence NRSSQHTGRVN.

Its subcellular location is the cytoplasm. The protein resides in the nucleus. Has a role in meiosis. The sequence is that of Meiotically up-regulated gene 108 protein (mug108) from Schizosaccharomyces pombe (strain 972 / ATCC 24843) (Fission yeast).